The primary structure comprises 321 residues: Glucokinase (321 aa).

Residue 8–13 (GDVGGT) participates in ATP binding.

This sequence belongs to the bacterial glucokinase family.

The protein resides in the cytoplasm. The enzyme catalyses D-glucose + ATP = D-glucose 6-phosphate + ADP + H(+). The chain is Glucokinase from Shigella flexneri serotype 5b (strain 8401).